We begin with the raw amino-acid sequence, 426 residues long: D-tagatose-1,6-bisphosphate aldolase subunit KbaZ (426 aa).

This sequence belongs to the GatZ/KbaZ family. KbaZ subfamily. In terms of assembly, forms a complex with KbaY.

The protein operates within carbohydrate metabolism; D-tagatose 6-phosphate degradation; D-glyceraldehyde 3-phosphate and glycerone phosphate from D-tagatose 6-phosphate: step 2/2. Its function is as follows. Component of the tagatose-1,6-bisphosphate aldolase KbaYZ that is required for full activity and stability of the Y subunit. Could have a chaperone-like function for the proper and stable folding of KbaY. When expressed alone, KbaZ does not show any aldolase activity. The sequence is that of D-tagatose-1,6-bisphosphate aldolase subunit KbaZ from Escherichia coli (strain ATCC 8739 / DSM 1576 / NBRC 3972 / NCIMB 8545 / WDCM 00012 / Crooks).